The primary structure comprises 109 residues: Transcription initiation factor IIA subunit 2 (109 aa).

It belongs to the TFIIA subunit 2 family. As to quaternary structure, TFIIA is a heterodimer of the large unprocessed subunit 1 and a small subunit gamma. It was originally believed to be a heterotrimer of an alpha (p35), a beta (p19) and a gamma subunit (p12). Interacts with NCOA6 general coactivator. TFIIA forms a complex with TBP. Interacts with HSF1 (via transactivation domain). Part of TBP-based Pol II pre-initiation complex (PIC), in which Pol II core assembles with general transcription factors and other specific initiation factors including GTF2E1, GTF2E2, GTF2F1, GTF2F2, TCEA1, ERCC2, ERCC3, GTF2H2, GTF2H3, GTF2H4, GTF2H5, GTF2A1, GTF2A2, GTF2B and TBP; this large multi-subunit PIC complex mediates DNA unwinding and targets Pol II core to the transcription start site where the first phosphodiester bond forms.

The protein localises to the nucleus. In terms of biological role, TFIIA is a component of the transcription machinery of RNA polymerase II and plays an important role in transcriptional activation. TFIIA in a complex with TBP mediates transcriptional activity. The sequence is that of Transcription initiation factor IIA subunit 2 (Gtf2a2) from Rattus norvegicus (Rat).